The primary structure comprises 204 residues: tRNA (pseudouridine(54)-N(1))-methyltransferase (204 aa).

S-adenosyl-L-methionine is bound by residues Leu136 and Gly158.

This sequence belongs to the methyltransferase superfamily. TrmY family. In terms of assembly, homodimer.

Its subcellular location is the cytoplasm. It carries out the reaction pseudouridine(54) in tRNA + S-adenosyl-L-methionine = N(1)-methylpseudouridine(54) in tRNA + S-adenosyl-L-homocysteine + H(+). Specifically catalyzes the N1-methylation of pseudouridine at position 54 (Psi54) in tRNAs. The sequence is that of tRNA (pseudouridine(54)-N(1))-methyltransferase from Pyrococcus abyssi (strain GE5 / Orsay).